A 97-amino-acid polypeptide reads, in one-letter code: Putative pterin-4-alpha-carbinolamine dehydratase (97 aa).

It belongs to the pterin-4-alpha-carbinolamine dehydratase family.

It carries out the reaction (4aS,6R)-4a-hydroxy-L-erythro-5,6,7,8-tetrahydrobiopterin = (6R)-L-erythro-6,7-dihydrobiopterin + H2O. The polypeptide is Putative pterin-4-alpha-carbinolamine dehydratase (Saccharolobus solfataricus (strain ATCC 35092 / DSM 1617 / JCM 11322 / P2) (Sulfolobus solfataricus)).